We begin with the raw amino-acid sequence, 132 residues long: Protein NrdI (132 aa).

Belongs to the NrdI family.

Its function is as follows. Probably involved in ribonucleotide reductase function. The sequence is that of Protein NrdI from Bartonella tribocorum (strain CIP 105476 / IBS 506).